The following is a 267-amino-acid chain: Diphthine synthase (267 aa).

S-adenosyl-L-methionine is bound by residues leucine 9, aspartate 87, isoleucine 90, 115 to 116 (SI), leucine 166, leucine 205, and histidine 230.

It belongs to the diphthine synthase family. In terms of assembly, homodimer.

It carries out the reaction 2-[(3S)-amino-3-carboxypropyl]-L-histidyl-[translation elongation factor 2] + 3 S-adenosyl-L-methionine = diphthine-[translation elongation factor 2] + 3 S-adenosyl-L-homocysteine + 3 H(+). Its pathway is protein modification; peptidyl-diphthamide biosynthesis. S-adenosyl-L-methionine-dependent methyltransferase that catalyzes the trimethylation of the amino group of the modified target histidine residue in translation elongation factor 2 (EF-2), to form an intermediate called diphthine. The three successive methylation reactions represent the second step of diphthamide biosynthesis. This is Diphthine synthase from Staphylothermus marinus (strain ATCC 43588 / DSM 3639 / JCM 9404 / F1).